The primary structure comprises 916 residues: DNA mismatch repair protein MutS (916 aa).

The tract at residues 1 to 47 (MSEALSVPAAEGENTVTASESPDLAATSARAEKVGKQEKPEKAEKQS) is disordered. Residues 30 to 45 (RAEKVGKQEKPEKAEK) are compositionally biased toward basic and acidic residues. An ATP-binding site is contributed by 656-663 (GPNMGGKS). Residues 843-861 (ADATPTPQMDLFSAQSSPS) are compositionally biased toward polar residues. The interval 843–880 (ADATPTPQMDLFSAQSSPSADDEDDKSAGQSAVPPAQA) is disordered.

Belongs to the DNA mismatch repair MutS family.

Functionally, this protein is involved in the repair of mismatches in DNA. It is possible that it carries out the mismatch recognition step. This protein has a weak ATPase activity. This Cupriavidus metallidurans (strain ATCC 43123 / DSM 2839 / NBRC 102507 / CH34) (Ralstonia metallidurans) protein is DNA mismatch repair protein MutS.